A 90-amino-acid chain; its full sequence is UPF0298 protein RBAM_014860 (90 aa).

The protein belongs to the UPF0298 family.

It localises to the cytoplasm. In Bacillus velezensis (strain DSM 23117 / BGSC 10A6 / LMG 26770 / FZB42) (Bacillus amyloliquefaciens subsp. plantarum), this protein is UPF0298 protein RBAM_014860.